The sequence spans 227 residues: ATP-dependent dethiobiotin synthetase BioD (227 aa).

13-18 (EVGKSV) is a binding site for ATP. Residue S17 coordinates Mg(2+). K38 is an active-site residue. S42 provides a ligand contact to substrate. ATP-binding positions include D55, 116-119 (EGAG), and 176-177 (ND). Mg(2+) is bound by residues D55 and E116.

Belongs to the dethiobiotin synthetase family. Homodimer. The cofactor is Mg(2+).

Its subcellular location is the cytoplasm. The enzyme catalyses (7R,8S)-7,8-diammoniononanoate + CO2 + ATP = (4R,5S)-dethiobiotin + ADP + phosphate + 3 H(+). Its pathway is cofactor biosynthesis; biotin biosynthesis; biotin from 7,8-diaminononanoate: step 1/2. Catalyzes a mechanistically unusual reaction, the ATP-dependent insertion of CO2 between the N7 and N8 nitrogen atoms of 7,8-diaminopelargonic acid (DAPA, also called 7,8-diammoniononanoate) to form a ureido ring. The sequence is that of ATP-dependent dethiobiotin synthetase BioD from Serratia marcescens.